A 634-amino-acid polypeptide reads, in one-letter code: Threonine--tRNA ligase (634 aa).

The TGS domain maps to 1 to 61 (MINIRFPDGS…NSNCELRLIT (61 aa)). The catalytic stretch occupies residues 241 to 532 (DHRKIGKVLD…LIEHYAGNLP (292 aa)). Residues Cys332, His383, and His509 each coordinate Zn(2+).

The protein belongs to the class-II aminoacyl-tRNA synthetase family. As to quaternary structure, homodimer. Zn(2+) is required as a cofactor.

The protein localises to the cytoplasm. It carries out the reaction tRNA(Thr) + L-threonine + ATP = L-threonyl-tRNA(Thr) + AMP + diphosphate + H(+). Functionally, catalyzes the attachment of threonine to tRNA(Thr) in a two-step reaction: L-threonine is first activated by ATP to form Thr-AMP and then transferred to the acceptor end of tRNA(Thr). Also edits incorrectly charged L-seryl-tRNA(Thr). This is Threonine--tRNA ligase from Francisella tularensis subsp. novicida (strain U112).